The sequence spans 335 residues: [Citrate [pro-3S]-lyase] ligase (335 aa).

An N-acetyltransferase domain is found at Met-1–Ser-131.

It carries out the reaction holo-[citrate lyase ACP] + acetate + ATP = acetyl-[citrate lyase ACP] + AMP + diphosphate. Its function is as follows. Acetylation of prosthetic group (2-(5''-phosphoribosyl)-3'-dephosphocoenzyme-A) of the gamma subunit of citrate lyase. The chain is [Citrate [pro-3S]-lyase] ligase (citC) from Haemophilus influenzae (strain ATCC 51907 / DSM 11121 / KW20 / Rd).